The primary structure comprises 199 residues: DnaJ homolog subfamily C member 5B (199 aa).

Phosphoserine occurs at positions 14 and 16. Positions 19–84 (ALYEILGLHK…SKRNIYDKYG (66 aa)) constitute a J domain.

Interacts with the chaperone complex consisting of HSC70 and SGTA. In terms of processing, palmitoylated.

The protein resides in the membrane. This is DnaJ homolog subfamily C member 5B (DNAJC5B) from Bos taurus (Bovine).